The sequence spans 162 residues: Cyclic pyranopterin monophosphate synthase (162 aa).

Residues 79–81 (LCH) and 117–118 (ME) contribute to the substrate site. The active site involves D132.

The protein belongs to the MoaC family. In terms of assembly, homohexamer; trimer of dimers.

The catalysed reaction is (8S)-3',8-cyclo-7,8-dihydroguanosine 5'-triphosphate = cyclic pyranopterin phosphate + diphosphate. It participates in cofactor biosynthesis; molybdopterin biosynthesis. Functionally, catalyzes the conversion of (8S)-3',8-cyclo-7,8-dihydroguanosine 5'-triphosphate to cyclic pyranopterin monophosphate (cPMP). The protein is Cyclic pyranopterin monophosphate synthase of Bordetella petrii (strain ATCC BAA-461 / DSM 12804 / CCUG 43448).